Here is a 178-residue protein sequence, read N- to C-terminus: uncharacterized protein (178 aa).

Residues 7-27 (LAIGTAILLIGMAYWTVSIVE) traverse the membrane as a helical segment.

The protein resides in the membrane. This is an uncharacterized protein from Methanocaldococcus jannaschii (strain ATCC 43067 / DSM 2661 / JAL-1 / JCM 10045 / NBRC 100440) (Methanococcus jannaschii).